The following is a 561-amino-acid chain: 2-methylisocitrate lyase, mitochondrial (561 aa).

The interval 154–177 (KAQSMHDRKQWDTRRKMSPDERSK) is disordered. Positions 157–177 (SMHDRKQWDTRRKMSPDERSK) are enriched in basic and acidic residues. Residue Cys-228 is part of the active site.

Belongs to the isocitrate lyase/PEP mutase superfamily. Isocitrate lyase family. It depends on Mg(2+) as a cofactor.

It is found in the mitochondrion matrix. The enzyme catalyses (2S,3R)-3-hydroxybutane-1,2,3-tricarboxylate = pyruvate + succinate. It functions in the pathway organic acid metabolism; propanoate degradation. In terms of biological role, component of the methylcitrate cycle that catalyzes the formation of pyruvate and succinate from 2-methylisocitrate during the metabolism of endogenous propionyl-CoA. Plays an important role for growth and development, but also in antagonism, root colonization and induction of defense responses in plants. The sequence is that of 2-methylisocitrate lyase, mitochondrial from Hypocrea atroviridis (strain ATCC 20476 / IMI 206040) (Trichoderma atroviride).